The sequence spans 412 residues: Argininosuccinate synthase (412 aa).

ATP is bound by residues Ala20–Ser28 and Ala48. L-citrulline contacts are provided by Tyr100 and Ser105. Residue Gly130 coordinates ATP. Residues Thr132, Asn136, and Asp137 each coordinate L-aspartate. Residue Asn136 participates in L-citrulline binding. Residues Arg140, Ser189, Ser198, Glu274, and Tyr286 each contribute to the L-citrulline site.

The protein belongs to the argininosuccinate synthase family. Type 1 subfamily. Homotetramer.

Its subcellular location is the cytoplasm. It carries out the reaction L-citrulline + L-aspartate + ATP = 2-(N(omega)-L-arginino)succinate + AMP + diphosphate + H(+). Its pathway is amino-acid biosynthesis; L-arginine biosynthesis; L-arginine from L-ornithine and carbamoyl phosphate: step 2/3. This chain is Argininosuccinate synthase, found in Shewanella halifaxensis (strain HAW-EB4).